The primary structure comprises 174 residues: Phosphopantetheine adenylyltransferase (174 aa).

Residue threonine 10 coordinates substrate. Residues threonine 10–phenylalanine 11 and histidine 18 each bind ATP. Substrate is bound by residues lysine 44, leucine 76, and arginine 90. Residues glycine 91–arginine 93, glutamate 101, and histidine 126–serine 132 each bind ATP.

The protein belongs to the bacterial CoaD family. As to quaternary structure, homohexamer. Mg(2+) serves as cofactor.

It localises to the cytoplasm. It catalyses the reaction (R)-4'-phosphopantetheine + ATP + H(+) = 3'-dephospho-CoA + diphosphate. The protein operates within cofactor biosynthesis; coenzyme A biosynthesis; CoA from (R)-pantothenate: step 4/5. Its function is as follows. Reversibly transfers an adenylyl group from ATP to 4'-phosphopantetheine, yielding dephospho-CoA (dPCoA) and pyrophosphate. This is Phosphopantetheine adenylyltransferase from Alkalilimnicola ehrlichii (strain ATCC BAA-1101 / DSM 17681 / MLHE-1).